The following is a 348-amino-acid chain: tRNA N6-adenosine threonylcarbamoyltransferase (348 aa).

2 residues coordinate Fe cation: histidine 115 and histidine 119. Residues leucine 138–glycine 142, aspartate 171, glycine 184, and asparagine 276 contribute to the substrate site. Aspartate 304 provides a ligand contact to Fe cation.

It belongs to the KAE1 / TsaD family. Fe(2+) is required as a cofactor.

It localises to the cytoplasm. The catalysed reaction is L-threonylcarbamoyladenylate + adenosine(37) in tRNA = N(6)-L-threonylcarbamoyladenosine(37) in tRNA + AMP + H(+). In terms of biological role, required for the formation of a threonylcarbamoyl group on adenosine at position 37 (t(6)A37) in tRNAs that read codons beginning with adenine. Is involved in the transfer of the threonylcarbamoyl moiety of threonylcarbamoyl-AMP (TC-AMP) to the N6 group of A37, together with TsaE and TsaB. TsaD likely plays a direct catalytic role in this reaction. The protein is tRNA N6-adenosine threonylcarbamoyltransferase of Xylella fastidiosa (strain 9a5c).